The primary structure comprises 210 residues: 3-hydroxy-3-methylglutaryl-coenzyme A reductase 2 (210 aa).

Active-site charge relay system residues include Lys-21 and Asp-97. The chain crosses the membrane as a helical span at residues Leu-166–Ile-186. His-195 functions as the Proton donor in the catalytic mechanism. The N-linked (GlcNAc...) asparagine glycan is linked to Asn-199.

It belongs to the HMG-CoA reductase family.

Its subcellular location is the endoplasmic reticulum membrane. The protein localises to the mitochondrion membrane. It is found in the plastid membrane. The enzyme catalyses (R)-mevalonate + 2 NADP(+) + CoA = (3S)-3-hydroxy-3-methylglutaryl-CoA + 2 NADPH + 2 H(+). It functions in the pathway metabolic intermediate biosynthesis; (R)-mevalonate biosynthesis; (R)-mevalonate from acetyl-CoA: step 3/3. Its function is as follows. Catalyzes the synthesis of mevalonate. The specific precursor of all isoprenoid compounds present in plants. This chain is 3-hydroxy-3-methylglutaryl-coenzyme A reductase 2 (HMGR2), found in Hevea brasiliensis (Para rubber tree).